The primary structure comprises 660 residues: ATPase-like fidgetin (660 aa).

Disordered stretches follow at residues Lys-141–Phe-186 and Ala-209–Lys-334. Low complexity predominate over residues Ser-145–Ser-161. Position 177 is a phosphoserine (Ser-177). The segment covering Asp-213–Leu-239 has biased composition (polar residues). The span at Ser-240–Asn-255 shows a compositional bias: low complexity. The segment covering Leu-301–Arg-313 has biased composition (polar residues). Positions Pro-314 to Ser-333 are enriched in low complexity. An ATP-binding site is contributed by Gly-419–Thr-426.

The protein belongs to the AAA ATPase family.

It is found in the nucleus. The chain is ATPase-like fidgetin (alf1) from Schizosaccharomyces pombe (strain 972 / ATCC 24843) (Fission yeast).